Consider the following 171-residue polypeptide: Methylated-DNA--protein-cysteine methyltransferase (171 aa).

The Nucleophile; methyl group acceptor role is filled by C139.

It belongs to the MGMT family.

It localises to the cytoplasm. It carries out the reaction a 6-O-methyl-2'-deoxyguanosine in DNA + L-cysteinyl-[protein] = S-methyl-L-cysteinyl-[protein] + a 2'-deoxyguanosine in DNA. The enzyme catalyses a 4-O-methyl-thymidine in DNA + L-cysteinyl-[protein] = a thymidine in DNA + S-methyl-L-cysteinyl-[protein]. In terms of biological role, involved in the cellular defense against the biological effects of O6-methylguanine (O6-MeG) and O4-methylthymine (O4-MeT) in DNA. Repairs the methylated nucleobase in DNA by stoichiometrically transferring the methyl group to a cysteine residue in the enzyme. This is a suicide reaction: the enzyme is irreversibly inactivated. The protein is Methylated-DNA--protein-cysteine methyltransferase of Shigella flexneri.